The sequence spans 336 residues: 4-hydroxy-3-methylbut-2-enyl diphosphate reductase (336 aa).

A [4Fe-4S] cluster-binding site is contributed by Cys-37. His-66 and His-99 together coordinate (2E)-4-hydroxy-3-methylbut-2-enyl diphosphate. Residues His-66 and His-99 each coordinate dimethylallyl diphosphate. Isopentenyl diphosphate contacts are provided by His-66 and His-99. Position 121 (Cys-121) interacts with [4Fe-4S] cluster. A (2E)-4-hydroxy-3-methylbut-2-enyl diphosphate-binding site is contributed by His-149. Position 149 (His-149) interacts with dimethylallyl diphosphate. Position 149 (His-149) interacts with isopentenyl diphosphate. Residue Glu-151 is the Proton donor of the active site. Thr-189 provides a ligand contact to (2E)-4-hydroxy-3-methylbut-2-enyl diphosphate. Position 219 (Cys-219) interacts with [4Fe-4S] cluster. 4 residues coordinate (2E)-4-hydroxy-3-methylbut-2-enyl diphosphate: Ser-247, Ser-248, Asn-249, and Ser-292. Dimethylallyl diphosphate contacts are provided by Ser-247, Ser-248, Asn-249, and Ser-292. Isopentenyl diphosphate contacts are provided by Ser-247, Ser-248, Asn-249, and Ser-292.

This sequence belongs to the IspH family. [4Fe-4S] cluster serves as cofactor.

The catalysed reaction is isopentenyl diphosphate + 2 oxidized [2Fe-2S]-[ferredoxin] + H2O = (2E)-4-hydroxy-3-methylbut-2-enyl diphosphate + 2 reduced [2Fe-2S]-[ferredoxin] + 2 H(+). The enzyme catalyses dimethylallyl diphosphate + 2 oxidized [2Fe-2S]-[ferredoxin] + H2O = (2E)-4-hydroxy-3-methylbut-2-enyl diphosphate + 2 reduced [2Fe-2S]-[ferredoxin] + 2 H(+). It functions in the pathway isoprenoid biosynthesis; dimethylallyl diphosphate biosynthesis; dimethylallyl diphosphate from (2E)-4-hydroxy-3-methylbutenyl diphosphate: step 1/1. Its pathway is isoprenoid biosynthesis; isopentenyl diphosphate biosynthesis via DXP pathway; isopentenyl diphosphate from 1-deoxy-D-xylulose 5-phosphate: step 6/6. Catalyzes the conversion of 1-hydroxy-2-methyl-2-(E)-butenyl 4-diphosphate (HMBPP) into a mixture of isopentenyl diphosphate (IPP) and dimethylallyl diphosphate (DMAPP). Acts in the terminal step of the DOXP/MEP pathway for isoprenoid precursor biosynthesis. This is 4-hydroxy-3-methylbut-2-enyl diphosphate reductase from Nocardia farcinica (strain IFM 10152).